The following is an 838-amino-acid chain: Probable beta-glucosidase K (838 aa).

Asn19 is a glycosylation site (N-linked (GlcNAc...) asparagine). The active site involves Asp232. Residues Asn324 and Asn489 are each glycosylated (N-linked (GlcNAc...) asparagine). One can recognise a PA14 domain in the interval 405–564 (EGQPGLRMRF…DPELAIARAV (160 aa)).

This sequence belongs to the glycosyl hydrolase 3 family.

The protein localises to the secreted. The enzyme catalyses Hydrolysis of terminal, non-reducing beta-D-glucosyl residues with release of beta-D-glucose.. Its pathway is glycan metabolism; cellulose degradation. Functionally, beta-glucosidases are one of a number of cellulolytic enzymes involved in the degradation of cellulosic biomass. Catalyzes the last step releasing glucose from the inhibitory cellobiose. The protein is Probable beta-glucosidase K (bglK) of Emericella nidulans (strain FGSC A4 / ATCC 38163 / CBS 112.46 / NRRL 194 / M139) (Aspergillus nidulans).